Here is a 172-residue protein sequence, read N- to C-terminus: Sec-independent protein translocase protein TatB (172 aa).

The helical transmembrane segment at Met-1–Gly-21 threads the bilayer. The interval Gly-97–Gln-129 is disordered.

Belongs to the TatB family. In terms of assembly, the Tat system comprises two distinct complexes: a TatABC complex, containing multiple copies of TatA, TatB and TatC subunits, and a separate TatA complex, containing only TatA subunits. Substrates initially bind to the TatABC complex, which probably triggers association of the separate TatA complex to form the active translocon.

The protein resides in the cell inner membrane. Part of the twin-arginine translocation (Tat) system that transports large folded proteins containing a characteristic twin-arginine motif in their signal peptide across membranes. Together with TatC, TatB is part of a receptor directly interacting with Tat signal peptides. TatB may form an oligomeric binding site that transiently accommodates folded Tat precursor proteins before their translocation. This chain is Sec-independent protein translocase protein TatB, found in Ralstonia nicotianae (strain ATCC BAA-1114 / GMI1000) (Ralstonia solanacearum).